A 333-amino-acid chain; its full sequence is MAGTMPLRPTYVGFVRDTTDALLIFEACLSGTLSHVPRRPHDRERQDLIKSGNIFVYEEHASGIKRWTDSISWSPSRILGNYLLYRELEKPFPPGEKKRARGRNGKSTTQSGGISKARQRNTVPFPQGLEHGNEYPSVPSDDERHLVGSLVDSYDFKEQGLVKKTISITYQGVPHHLVSYYNVEDVKAGLLSGPSDDPRLRGVVPRTELMNGQNFRAPVEEAMGGSYMPSMVASIGYPTLQHQSQMHQSQMHQPQMHQPQMHQSQMHQSQMHQPQMHQPQAHQPQVHQPQVHPPQVHQPQAHQPQYQSQTLHPTHGYQQTYAGQPNAPSSTWW.

Disordered stretches follow at residues 93-139 and 241-307; these read PPGE…PSVP and QHQS…PQYQ.

It belongs to the MIT1/WOR1 family.

The protein resides in the nucleus. Global transcriptional regulator that acts as an activator of secondary metabolism. Required for expression of a yet uncharacterized secondary metabolism gene cluster containing a non-canonical non-ribosomal peptide synthetase. Not required for conidiogenesis nor for pathogenicity, but is involved in vegetative growth. The sequence is that of Global transcription regulator sge1 from Gibberella fujikuroi (strain CBS 195.34 / IMI 58289 / NRRL A-6831) (Bakanae and foot rot disease fungus).